The following is an 867-amino-acid chain: FO synthase (867 aa).

Residues 1–22 (MTTSATSGTGPADPAGPTENSM) are disordered. Radical SAM core domains are found at residues 75-325 (ITYS…LQAP) and 534-769 (VTYI…LLHP). Residues 76-407 (TYSKSVFVPL…PRLRPHVAAL (332 aa)) form a cofG-like region. Residues Cys89, Cys93, Cys96, Cys548, Cys552, and Cys555 each coordinate [4Fe-4S] cluster. Positions 511–844 (EGPALDALCG…KPRTTLYGPV (334 aa)) are cofH-like. Positions 835–867 (KPRTTLYGPVPEERQRAARDSDGHLPELLPVLD) are disordered. A compositionally biased stretch (basic and acidic residues) spans 845–859 (PEERQRAARDSDGHL).

In the N-terminal section; belongs to the radical SAM superfamily. CofG family. It in the C-terminal section; belongs to the radical SAM superfamily. CofH family. [4Fe-4S] cluster is required as a cofactor.

It catalyses the reaction 5-amino-6-(D-ribitylamino)uracil + L-tyrosine + S-adenosyl-L-methionine = 5-amino-5-(4-hydroxybenzyl)-6-(D-ribitylimino)-5,6-dihydrouracil + 2-iminoacetate + 5'-deoxyadenosine + L-methionine + H(+). The catalysed reaction is 5-amino-5-(4-hydroxybenzyl)-6-(D-ribitylimino)-5,6-dihydrouracil + S-adenosyl-L-methionine = 7,8-didemethyl-8-hydroxy-5-deazariboflavin + 5'-deoxyadenosine + L-methionine + NH4(+) + H(+). It functions in the pathway cofactor biosynthesis; coenzyme F0 biosynthesis. Its function is as follows. Catalyzes the radical-mediated synthesis of 7,8-didemethyl-8-hydroxy-5-deazariboflavin (FO) from 5-amino-6-(D-ribitylamino)uracil and L-tyrosine. The sequence is that of FO synthase (fbiC) from Streptomyces coelicolor (strain ATCC BAA-471 / A3(2) / M145).